A 1149-amino-acid polypeptide reads, in one-letter code: Eukaryotic translation initiation factor 3 subunit A (1149 aa).

One can recognise a PCI domain in the interval 317 to 498 (IQRMTSHVLI…HSVHFGTDLS (182 aa)). 2 disordered regions span residues 496–515 (DLSESQREDHPDGPTLQSMP) and 811–1149 (EEER…KHHR). Positions 811-885 (EEERRRIEEE…APRGEKEERG (75 aa)) are enriched in basic and acidic residues. Over residues 886–895 (GGGGGGGAWR) the composition is skewed to gly residues. The segment covering 908–924 (AKPESDWRNAREAREPA) has biased composition (basic and acidic residues). Low complexity predominate over residues 925 to 937 (PESAGASSAAAPA). 3 stretches are compositionally biased toward basic and acidic residues: residues 961-970 (RPPRGDDREP), 1005-1095 (GPMR…DRRG), and 1113-1132 (EPAKPREERRGGEERPKEAR).

This sequence belongs to the eIF-3 subunit A family. As to quaternary structure, component of the eukaryotic translation initiation factor 3 (eIF-3) complex.

It is found in the cytoplasm. Functionally, RNA-binding component of the eukaryotic translation initiation factor 3 (eIF-3) complex, which is involved in protein synthesis of a specialized repertoire of mRNAs and, together with other initiation factors, stimulates binding of mRNA and methionyl-tRNAi to the 40S ribosome. The eIF-3 complex specifically targets and initiates translation of a subset of mRNAs involved in cell proliferation. The sequence is that of Eukaryotic translation initiation factor 3 subunit A from Culex quinquefasciatus (Southern house mosquito).